We begin with the raw amino-acid sequence, 347 residues long: S-adenosylmethionine:tRNA ribosyltransferase-isomerase (347 aa).

This sequence belongs to the QueA family. In terms of assembly, monomer.

It localises to the cytoplasm. The catalysed reaction is 7-aminomethyl-7-carbaguanosine(34) in tRNA + S-adenosyl-L-methionine = epoxyqueuosine(34) in tRNA + adenine + L-methionine + 2 H(+). The protein operates within tRNA modification; tRNA-queuosine biosynthesis. Functionally, transfers and isomerizes the ribose moiety from AdoMet to the 7-aminomethyl group of 7-deazaguanine (preQ1-tRNA) to give epoxyqueuosine (oQ-tRNA). This chain is S-adenosylmethionine:tRNA ribosyltransferase-isomerase, found in Ectopseudomonas mendocina (strain ymp) (Pseudomonas mendocina).